Reading from the N-terminus, the 520-residue chain is GMP synthase [glutamine-hydrolyzing] (520 aa).

The 194-residue stretch at 9 to 202 folds into the Glutamine amidotransferase type-1 domain; that stretch reads TILIIDFGSQ…VHRIVGVKPG (194 aa). Catalysis depends on cysteine 86, which acts as the Nucleophile. Residues histidine 176 and glutamate 178 contribute to the active site. The region spanning 203-395 is the GMPS ATP-PPase domain; it reads WTMGAYREQA…LGLPDSFIGR (193 aa). 230 to 236 contributes to the ATP binding site; the sequence is SGGVDSS.

As to quaternary structure, homodimer.

The enzyme catalyses XMP + L-glutamine + ATP + H2O = GMP + L-glutamate + AMP + diphosphate + 2 H(+). It functions in the pathway purine metabolism; GMP biosynthesis; GMP from XMP (L-Gln route): step 1/1. Its function is as follows. Catalyzes the synthesis of GMP from XMP. In Brucella abortus (strain S19), this protein is GMP synthase [glutamine-hydrolyzing].